Reading from the N-terminus, the 293-residue chain is N-acetylneuraminate lyase (293 aa).

Residues Ser48 and Ser49 each contribute to the aceneuramate site. Tyr137 serves as the catalytic Proton donor. Residue Lys165 is the Schiff-base intermediate with substrate of the active site. Thr167, Gly189, Asp191, Glu192, and Ser208 together coordinate aceneuramate.

This sequence belongs to the DapA family. NanA subfamily. In terms of assembly, homotetramer.

It is found in the cytoplasm. It carries out the reaction aceneuramate = aldehydo-N-acetyl-D-mannosamine + pyruvate. It participates in amino-sugar metabolism; N-acetylneuraminate degradation; D-fructose 6-phosphate from N-acetylneuraminate: step 1/5. Catalyzes the reversible aldol cleavage of N-acetylneuraminic acid (sialic acid; Neu5Ac) to form pyruvate and N-acetylmannosamine (ManNAc) via a Schiff base intermediate. The protein is N-acetylneuraminate lyase of Staphylococcus aureus (strain MRSA252).